A 600-amino-acid chain; its full sequence is Protein GPR107 (600 aa).

The first 39 residues, 1–39 (MAALAPVGSPASRGPRLAAGLRLLPMLGLLQLLAEPGLG), serve as a signal peptide directing secretion. At 40–263 (RVHHLALKDD…YLSAGEIPLP (224 aa)) the chain is on the extracellular side. N-linked (GlcNAc...) asparagine glycans are attached at residues N70 and N169. C109 and C228 are disulfide-bonded. Residues 157 to 175 (SQEPNVNPASAGNQTQKTQ) are compositionally biased toward polar residues. The interval 157 to 185 (SQEPNVNPASAGNQTQKTQDGGKSKRSTV) is disordered. Residues 176–185 (DGGKSKRSTV) show a composition bias toward basic and acidic residues. A glycan (N-linked (GlcNAc...) asparagine) is linked at N211. The helical transmembrane segment at 264–284 (KLYISMAFFFFLSGTIWIHIL) threads the bilayer. Topologically, residues 285 to 293 (RKRRNDVFK) are cytoplasmic. Residues 294–314 (IHWLMAALPFTKSLSLVFHAI) form a helical membrane-spanning segment. Topologically, residues 315–337 (DYHYISSQGFPIEGWAVVYYITH) are extracellular. The chain crosses the membrane as a helical span at residues 338-358 (LLKGALLFITIALIGTGWAFI). Topologically, residues 359 to 368 (KHILSDKDKK) are cytoplasmic. The chain crosses the membrane as a helical span at residues 369-389 (IFMIVIPLQVLANVAYIIIES). Topologically, residues 390-402 (TEEGTTEYGLWKD) are extracellular. Residues 403 to 423 (SLFLVDLLCCGAILFPVVWSI) form a helical membrane-spanning segment. Residues 424–498 (RHLQEASATD…AKLKLFRHYY (75 aa)) are Cytoplasmic-facing. The helical transmembrane segment at 499–519 (VLIVCYIYFTRIIAFLLKLAV) threads the bilayer. At 520 to 524 (PFQWK) the chain is on the extracellular side. Residues 525-544 (WLYQLLDETATLVFFVLTGY) traverse the membrane as a helical segment. At 545 to 600 (KFRPASDNPYLQLSQEEEDLEMESVVTTSGVMESMKKVKKVTNGSVEPQGEWEGAV) the chain is on the cytoplasmic side.

It belongs to the LU7TM family. In terms of processing, cleaved by FURIN to yield two fragments of 17 and 35 kDa that remain associated via a disulfide bond.

The protein resides in the cell membrane. Its subcellular location is the golgi apparatus. It is found in the trans-Golgi network membrane. Functionally, has been proposed to act as a receptor for neuronostatin, a peptide derived from the somatostatin/SST precursor. Involved in blood sugar regulation through the induction of glucagon in response to low glucose. Its function is as follows. (Microbial infection) Required for intoxication by Pseudomonas aeruginosa exotoxin A and Campylobacter jejuni CDT. May contribute to the retrograde transport of bacterial toxins, including cholera toxin, from the trans-Golgi network to the endoplasmic reticulum. The protein is Protein GPR107 (GPR107) of Homo sapiens (Human).